The sequence spans 29 residues: Chassatide C1 (29 aa).

The segment at residues 1 to 29 (GDACGETCFTGICFTAGCSCNPWPTCTRN) is a cross-link (cyclopeptide (Gly-Asn)). Cystine bridges form between Cys4–Cys18, Cys8–Cys20, and Cys13–Cys26.

In terms of processing, this is a cyclic peptide. Expressed in leaf, fruit, pedical and stem but not in root (at protein level).

Functionally, probably participates in a plant defense mechanism. This Chassalia chartacea (Chassalia curviflora) protein is Chassatide C1.